A 294-amino-acid polypeptide reads, in one-letter code: Protoheme IX farnesyltransferase (294 aa).

A run of 9 helical transmembrane segments spans residues 24 to 44 (VVLLMLLTVIVGMYLAAPGWV), 48 to 68 (LIAFTLLGIGLCAGSAAAINH), 96 to 116 (ALWFAVIIGLMGLSLLILFVN), 118 to 138 (LTALLTFVTLIGYAGVYTGYL), 146 to 166 (IVIGGLAGAAPPLLGWTAVTG), 172 to 192 (ALLLVLIIFTWTPPHFWALAI), 224 to 244 (VLLLVVSLLPFVVSMSGWIYL), 245 to 265 (LGALVLGIRFLVWAHKLYFTD), and 268 to 288 (VVAMQTFRFSILYLMLLFVFL).

Belongs to the UbiA prenyltransferase family. Protoheme IX farnesyltransferase subfamily.

It localises to the cell inner membrane. The catalysed reaction is heme b + (2E,6E)-farnesyl diphosphate + H2O = Fe(II)-heme o + diphosphate. Its pathway is porphyrin-containing compound metabolism; heme O biosynthesis; heme O from protoheme: step 1/1. Functionally, converts heme B (protoheme IX) to heme O by substitution of the vinyl group on carbon 2 of heme B porphyrin ring with a hydroxyethyl farnesyl side group. This chain is Protoheme IX farnesyltransferase, found in Legionella pneumophila (strain Paris).